Reading from the N-terminus, the 231-residue chain is Enolase-phosphatase E1 (231 aa).

It belongs to the HAD-like hydrolase superfamily. MasA/MtnC family. In terms of assembly, monomer. Mg(2+) is required as a cofactor.

The catalysed reaction is 5-methylsulfanyl-2,3-dioxopentyl phosphate + H2O = 1,2-dihydroxy-5-(methylsulfanyl)pent-1-en-3-one + phosphate. Its pathway is amino-acid biosynthesis; L-methionine biosynthesis via salvage pathway; L-methionine from S-methyl-5-thio-alpha-D-ribose 1-phosphate: step 3/6. It participates in amino-acid biosynthesis; L-methionine biosynthesis via salvage pathway; L-methionine from S-methyl-5-thio-alpha-D-ribose 1-phosphate: step 4/6. Its function is as follows. Bifunctional enzyme that catalyzes the enolization of 2,3-diketo-5-methylthiopentyl-1-phosphate (DK-MTP-1-P) into the intermediate 2-hydroxy-3-keto-5-methylthiopentenyl-1-phosphate (HK-MTPenyl-1-P), which is then dephosphorylated to form the acireductone 1,2-dihydroxy-3-keto-5-methylthiopentene (DHK-MTPene). This is Enolase-phosphatase E1 from Granulibacter bethesdensis (strain ATCC BAA-1260 / CGDNIH1).